Consider the following 353-residue polypeptide: Phospho-furanose lactonase (353 aa).

Zn(2+) contacts are provided by histidine 25, histidine 27, lysine 153, histidine 186, and histidine 214. The residue at position 153 (lysine 153) is an N6-carboxylysine. 244-245 (KY) serves as a coordination point for substrate. Aspartate 272 contacts Zn(2+). Residue 275–278 (RILY) participates in substrate binding.

This sequence belongs to the metallo-dependent hydrolases superfamily. Phosphotriesterase family. Requires Zn(2+) as cofactor.

It carries out the reaction a 1,4-lactone + H2O = a 4-hydroxyacid + H(+). The enzyme catalyses D-xylono-1,4-lactone 5-phosphate + H2O = 5-phospho-D-xylonate + H(+). The catalysed reaction is L-arabino-1,4-lactone 5-phosphate + H2O = 5-phospho-L-arabinonate + H(+). Functionally, catalyzes the hydrolysis of D-xylono-1,4-lactone-5-phosphate and L-arabino-1,4-lactone-5-phosphate. Also able to hydrolyze carboxy 1,4-lactones. This Mycoplasmopsis agalactiae (strain NCTC 10123 / CIP 59.7 / PG2) (Mycoplasma agalactiae) protein is Phospho-furanose lactonase.